The chain runs to 448 residues: Dual specificity mitogen-activated protein kinase kinase 5 (448 aa).

Positions 18-25 (VIRIKIPN) are interaction with MAPK7. One can recognise a PB1 domain in the interval 18–109 (VIRIKIPNSG…EPLQIFPRAC (92 aa)). The segment at 64–68 (DEDGD) is interaction with MAP3K2/MAP3K3. The interval 116–144 (NIHGLKVNTRAGPSQHTSPVVSDSLPSNS) is disordered. Residues 117–131 (IHGLKVNTRAGPSQH) form an interaction with MAPK7 region. Over residues 126-144 (AGPSQHTSPVVSDSLPSNS) the composition is skewed to polar residues. The region spanning 166–419 (IRYRDTLGHG…PEELMGHPFI (254 aa)) is the Protein kinase domain. Residues 172–180 (LGHGNGGTV) and lysine 195 each bind ATP. The active-site Proton acceptor is aspartate 283. Serine 311 is modified (phosphoserine). Residue threonine 315 is modified to Phosphothreonine.

The protein belongs to the protein kinase superfamily. STE Ser/Thr protein kinase family. MAP kinase kinase subfamily. As to quaternary structure, interacts with PARD6A, MAP3K3 and MAPK7. Forms a complex with SQSTM1 and PRKCZ or PRKCI. Requires Mg(2+) as cofactor. In terms of processing, activated by phosphorylation on Ser/Thr by MAP kinase kinase kinases.

It localises to the cytoplasm. It carries out the reaction L-seryl-[protein] + ATP = O-phospho-L-seryl-[protein] + ADP + H(+). The catalysed reaction is L-threonyl-[protein] + ATP = O-phospho-L-threonyl-[protein] + ADP + H(+). It catalyses the reaction L-tyrosyl-[protein] + ATP = O-phospho-L-tyrosyl-[protein] + ADP + H(+). Its function is as follows. Acts as a scaffold for the formation of a ternary MAP3K2/MAP3K3-MAP3K5-MAPK7 signaling complex. Activation of this pathway appears to play a critical role in protecting cells from stress-induced apoptosis, neuronal survival and cardiac development and angiogenesis. As part of the MAPK/ERK signaling pathway, acts as a negative regulator of apoptosis in cardiomyocytes via promotion of STUB1/CHIP-mediated ubiquitination and degradation of ICER-type isoforms of CREM. The chain is Dual specificity mitogen-activated protein kinase kinase 5 (Map2k5) from Mus musculus (Mouse).